Here is a 454-residue protein sequence, read N- to C-terminus: COBRA-like protein 6 (454 aa).

The signal sequence occupies residues 1–24 (MGAMLNLLLVVTVILCSILSPTRF). Residues N104, N191, N320, N355, and N391 are each glycosylated (N-linked (GlcNAc...) asparagine). A lipid anchor (GPI-anchor amidated serine) is attached at S429. The propeptide at 430–454 (SSSSAVISSVSVVFCFLLHHLLLLV) is removed in mature form.

It belongs to the COBRA family. In terms of tissue distribution, expressed in flowers and siliques.

Its subcellular location is the cell membrane. This Arabidopsis thaliana (Mouse-ear cress) protein is COBRA-like protein 6 (COBL6).